The sequence spans 182 residues: MQTEHVILLNAQGVPTGTLEKYAAHTADTLLHLAFSSWLFNAKGQLLVTRRALSKKAWPGVWTNSVCGHPQLGERNEDAVIRRCRYELGVEITPPESIYPDFRYRATDPNGIVENEVCPVFAARTNSALQINDDEVMDYQWCDLADVLHGIDATPWAFSPWMVMQAANSEARKLLSAFAQHN.

Mn(2+) is bound by residues His25 and His32. The Nudix hydrolase domain maps to 30 to 164; the sequence is LLHLAFSSWL…PWAFSPWMVM (135 aa). Cys67 is a catalytic residue. His69 is a binding site for Mn(2+). A Mg(2+)-binding site is contributed by Glu87. Glu114 and Glu116 together coordinate Mn(2+). Glu116 is an active-site residue.

It belongs to the IPP isomerase type 1 family. In terms of assembly, homodimer. The cofactor is Mg(2+). Mn(2+) is required as a cofactor.

It localises to the cytoplasm. The enzyme catalyses isopentenyl diphosphate = dimethylallyl diphosphate. It functions in the pathway isoprenoid biosynthesis; dimethylallyl diphosphate biosynthesis; dimethylallyl diphosphate from isopentenyl diphosphate: step 1/1. Functionally, catalyzes the 1,3-allylic rearrangement of the homoallylic substrate isopentenyl (IPP) to its highly electrophilic allylic isomer, dimethylallyl diphosphate (DMAPP). The polypeptide is Isopentenyl-diphosphate Delta-isomerase (Shigella boydii serotype 18 (strain CDC 3083-94 / BS512)).